The sequence spans 284 residues: Sulfotransferase 4A1 (284 aa).

Phosphothreonine occurs at positions 8, 11, and 205.

It belongs to the sulfotransferase 1 family. In terms of tissue distribution, highly expressed in the cerebral cortex and frontal lobe, slightly less in the cerebellum, occipital and temporal lobes, relatively low in the medulla and putamen, and lowest in the spinal cord. No expression detected in the pancreas. Highly expressed in fetal brain and occipital lobe, slightly less in the whole brain, frontal lobe, hippocampus, and lung, very low expression in cerebellum, medulla oblongata, temporal lobe, testis, kidney and appendix.

It is found in the cytoplasm. Functionally, atypical sulfotransferase family member with very low affinity for 3'-phospho-5'-adenylyl sulfate (PAPS) and very low catalytic activity towards L-triiodothyronine, thyroxine, estrone, p-nitrophenol, 2-naphthylamine, and 2-beta-naphthol. May have a role in the metabolism of drugs and neurotransmitters in the CNS. In Homo sapiens (Human), this protein is Sulfotransferase 4A1 (SULT4A1).